The following is a 363-amino-acid chain: 3-isopropylmalate dehydrogenase (363 aa).

Residue 78–91 coordinates NAD(+); sequence GPKWEHLPPDQQPE. Substrate-binding residues include Arg-99, Arg-109, Arg-138, and Asp-227. Mg(2+)-binding residues include Asp-227, Asp-251, and Asp-255. 285–297 lines the NAD(+) pocket; that stretch reads GSAPDIAGKNIAN.

It belongs to the isocitrate and isopropylmalate dehydrogenases family. LeuB type 1 subfamily. As to quaternary structure, homodimer. Requires Mg(2+) as cofactor. Mn(2+) is required as a cofactor.

The protein localises to the cytoplasm. The enzyme catalyses (2R,3S)-3-isopropylmalate + NAD(+) = 4-methyl-2-oxopentanoate + CO2 + NADH. It functions in the pathway amino-acid biosynthesis; L-leucine biosynthesis; L-leucine from 3-methyl-2-oxobutanoate: step 3/4. Requires K(+) ions for optimum activity. Catalyzes the oxidation of 3-carboxy-2-hydroxy-4-methylpentanoate (3-isopropylmalate) to 3-carboxy-4-methyl-2-oxopentanoate. The product decarboxylates to 4-methyl-2 oxopentanoate. In Escherichia coli (strain K12), this protein is 3-isopropylmalate dehydrogenase.